We begin with the raw amino-acid sequence, 1027 residues long: D-2-hydroxyglutarate dehydrogenase (1027 aa).

The FAD-binding PCMH-type domain maps to 48–284 (YQQLPQAILF…CEAKLNLLLI (237 aa)). Arg405 and His503 together coordinate (R)-2-hydroxyglutarate. Positions 665 to 696 (HEVKAAMDTCLACKACASQCPIKIDVPSFRAK) constitute a 4Fe-4S ferredoxin-type domain. The [4Fe-4S] cluster site is built by Cys674, Cys677, Cys680, and Cys684.

It in the N-terminal section; belongs to the FAD-binding oxidoreductase/transferase type 4 family. Homotetramer. The cofactor is [4Fe-4S] cluster. FAD serves as cofactor.

It catalyses the reaction (R)-2-hydroxyglutarate + A = 2-oxoglutarate + AH2. In terms of biological role, catalyzes the oxidation of D-2-hydroxyglutarate (D-2-HGA) to 2-oxoglutarate. Provides the way to recycle D-2-HGA produced during L-serine synthesis by SerA, by converting it back to 2-oxoglutarate. The physiological molecule that functions as the primary electron acceptor during D-2-HGA oxidation is unknown. The protein is D-2-hydroxyglutarate dehydrogenase of Haemophilus influenzae (strain ATCC 51907 / DSM 11121 / KW20 / Rd).